Consider the following 189-residue polypeptide: Shikimate kinase (189 aa).

Residue 22-27 (ASGKST) participates in ATP binding. Ser26 lines the Mg(2+) pocket. Asp44, Arg68, and Gly90 together coordinate substrate. Arg128 is an ATP binding site. Arg147 is a binding site for substrate.

Belongs to the shikimate kinase family. As to quaternary structure, monomer. The cofactor is Mg(2+).

It localises to the cytoplasm. The catalysed reaction is shikimate + ATP = 3-phosphoshikimate + ADP + H(+). It participates in metabolic intermediate biosynthesis; chorismate biosynthesis; chorismate from D-erythrose 4-phosphate and phosphoenolpyruvate: step 5/7. Its function is as follows. Catalyzes the specific phosphorylation of the 3-hydroxyl group of shikimic acid using ATP as a cosubstrate. The chain is Shikimate kinase from Synechococcus sp. (strain JA-3-3Ab) (Cyanobacteria bacterium Yellowstone A-Prime).